The sequence spans 191 residues: Glutathione-dependent formaldehyde-activating enzyme (191 aa).

In terms of domain architecture, CENP-V/GFA spans Phe-22 to Asp-169. Zn(2+) is bound by residues Cys-29, Cys-31, Cys-50, Cys-52, Cys-55, Cys-97, and Cys-100.

The protein belongs to the Gfa family. Zn(2+) serves as cofactor.

The enzyme catalyses S-(hydroxymethyl)glutathione = glutathione + formaldehyde. The protein operates within one-carbon metabolism; formaldehyde degradation; formate from formaldehyde (glutathione route): step 1/3. In terms of biological role, catalyzes the condensation of formaldehyde and glutathione to S-hydroxymethylglutathione. The chain is Glutathione-dependent formaldehyde-activating enzyme from Xanthomonas axonopodis pv. citri (strain 306).